A 2839-amino-acid polypeptide reads, in one-letter code: Bifunctional DNA-directed RNA polymerase subunit beta-beta' (2839 aa).

The tract at residues 1 to 1433 is DNA-directed RNA polymerase subunit beta; that stretch reads MVDSSYMCAS…CLNVALKQNN (1433 aa). A DNA-directed RNA polymerase subunit beta' region spans residues 1436–2839; the sequence is IEDISHTNIA…KESVAESRYN (1404 aa). Positions 1501, 1503, 1516, and 1519 each coordinate Zn(2+). Residues Asp1893, Asp1895, and Asp1897 each contribute to the Mg(2+) site. Residues Cys2238, Cys2312, Cys2319, and Cys2322 each contribute to the Zn(2+) site.

In the N-terminal section; belongs to the RNA polymerase beta chain family. This sequence in the C-terminal section; belongs to the RNA polymerase beta' chain family. In terms of assembly, the RNAP catalytic core consists of 2 alpha, 1 beta/beta' and 1 omega subunit. When a sigma factor is associated with the core the holoenzyme is formed, which can initiate transcription. Mg(2+) is required as a cofactor. It depends on Zn(2+) as a cofactor.

It catalyses the reaction RNA(n) + a ribonucleoside 5'-triphosphate = RNA(n+1) + diphosphate. Functionally, DNA-dependent RNA polymerase catalyzes the transcription of DNA into RNA using the four ribonucleoside triphosphates as substrates. This is Bifunctional DNA-directed RNA polymerase subunit beta-beta' (rpoBC) from Wolbachia sp. subsp. Brugia malayi (strain TRS).